The sequence spans 198 residues: Recombination protein RecR (198 aa).

The segment at 57–72 (CEKCNTFTEAQICEVC) adopts a C4-type zinc-finger fold. Residues 80 to 175 (TLLCVVETPA…SVTRLARGVP (96 aa)) enclose the Toprim domain.

It belongs to the RecR family.

Functionally, may play a role in DNA repair. It seems to be involved in an RecBC-independent recombinational process of DNA repair. It may act with RecF and RecO. The polypeptide is Recombination protein RecR (Paraburkholderia phymatum (strain DSM 17167 / CIP 108236 / LMG 21445 / STM815) (Burkholderia phymatum)).